The primary structure comprises 150 residues: Endoribonuclease YbeY (150 aa).

Positions 115, 119, and 125 each coordinate Zn(2+).

Belongs to the endoribonuclease YbeY family. Requires Zn(2+) as cofactor.

Its subcellular location is the cytoplasm. Functionally, single strand-specific metallo-endoribonuclease involved in late-stage 70S ribosome quality control and in maturation of the 3' terminus of the 16S rRNA. This chain is Endoribonuclease YbeY, found in Aquifex aeolicus (strain VF5).